Consider the following 307-residue polypeptide: Mediator of RNA polymerase II transcription subunit 18 (307 aa).

Residues threonine 117–glutamine 126 show a composition bias toward polar residues. A disordered region spans residues threonine 117–serine 162.

The protein belongs to the Mediator complex subunit 18 family. As to quaternary structure, component of the Mediator complex, which is composed of at least 21 subunits that form three structurally distinct submodules. The Mediator head module contains MED6, MED8, MED11, SRB4/MED17, SRB5/MED18, ROX3/MED19, SRB2/MED20 and SRB6/MED22, the middle module contains MED1, MED4, NUT1/MED5, MED7, CSE2/MED9, NUT2/MED10, SRB7/MED21 and SOH1/MED31, and the tail module contains MED2, PGD1/MED3, RGR1/MED14, GAL11/MED15 and SIN4/MED16. The head and the middle modules interact directly with RNA polymerase II, whereas the elongated tail module interacts with gene-specific regulatory proteins. SRB5/MED18 interacts directly with MED8 and SRB2/MED20.

It is found in the nucleus. In terms of biological role, component of the Mediator complex, a coactivator involved in the regulated transcription of nearly all RNA polymerase II-dependent genes. Mediator functions as a bridge to convey information from gene-specific regulatory proteins to the basal RNA polymerase II transcription machinery. The Mediator complex, having a compact conformation in its free form, is recruited to promoters by direct interactions with regulatory proteins and serves for the assembly of a functional preinitiation complex with RNA polymerase II and the general transcription factors. The Mediator complex unfolds to an extended conformation and partially surrounds RNA polymerase II, specifically interacting with the unphosphorylated form of the C-terminal domain (CTD) of RNA polymerase II. The Mediator complex dissociates from the RNA polymerase II holoenzyme and stays at the promoter when transcriptional elongation begins. The sequence is that of Mediator of RNA polymerase II transcription subunit 18 (SRB5) from Saccharomyces cerevisiae (strain ATCC 204508 / S288c) (Baker's yeast).